The following is a 644-amino-acid chain: uncharacterized protein (644 aa).

Residues 1 to 35 are disordered; that stretch reads MKANGLDNDPARTGMERTDIDSEHPEAQPLLNNNH. Topologically, residues 1–90 are cytoplasmic; the sequence is MKANGLDNDP…ILNILILINT (90 aa). Residues 14-26 are compositionally biased toward basic and acidic residues; that stretch reads GMERTDIDSEHPE. 3 positions are modified to phosphoserine: Ser22, Ser56, and Ser63. Residues 91-111 form a helical membrane-spanning segment; that stretch reads IWLVTTLISDFFFNINILFGF. Topologically, residues 112 to 122 are vacuolar; sequence SNRYASFNDLT. The chain crosses the membrane as a helical span at residues 123 to 143; that stretch reads LIFISIIANSFNLWFNKLGLY. The Cytoplasmic segment spans residues 144-147; the sequence is SALD. A helical transmembrane segment spans residues 148–168; it reads YSLNVTLCVLTLFNLALTYLI. The Vacuolar portion of the chain corresponds to 169 to 174; it reads KYTRQR. A helical membrane pass occupies residues 175–195; sequence IGFVGTFTYLWTSFSFFIGAI. At 196–271 the chain is on the cytoplasmic side; sequence LDWYLLFYNN…EWVSIGFRNT (76 aa). The segment at 225–251 is disordered; the sequence is NENHTNSTENRDRSQYGSGSPTPTHRS. Polar residues predominate over residues 239-251; that stretch reads QYGSGSPTPTHRS. Ser244 is modified (phosphoserine). The chain crosses the membrane as a helical span at residues 272 to 292; the sequence is IKFLILIFFALFTLNTLLTTL. Topologically, residues 293-644 are vacuolar; sequence DTYRLTHKLP…IGELGKLTED (352 aa). The 272-residue stretch at 348-619 folds into the AB hydrolase-1 domain; the sequence is PIILFEHGGY…IVEGGHEIYK (272 aa). Residues 469-492 are disordered; it reads GRGDGDDGDDGNGNDGDGRNHDKT.

The protein resides in the vacuole membrane. This is an uncharacterized protein from Saccharomyces cerevisiae (strain ATCC 204508 / S288c) (Baker's yeast).